Here is a 341-residue protein sequence, read N- to C-terminus: Anthranilate phosphoribosyltransferase (341 aa).

5-phospho-alpha-D-ribose 1-diphosphate contacts are provided by residues Gly79, 82-83, Thr87, 89-92, 107-115, and Ser119; these read GD, NIST, and KHGNRAATS. Gly79 contributes to the anthranilate binding site. Ser91 contributes to the Mg(2+) binding site. Position 110 (Asn110) interacts with anthranilate. An anthranilate-binding site is contributed by Arg165. Residues Asp224 and Glu225 each contribute to the Mg(2+) site.

It belongs to the anthranilate phosphoribosyltransferase family. In terms of assembly, homodimer. Mg(2+) is required as a cofactor.

It carries out the reaction N-(5-phospho-beta-D-ribosyl)anthranilate + diphosphate = 5-phospho-alpha-D-ribose 1-diphosphate + anthranilate. It participates in amino-acid biosynthesis; L-tryptophan biosynthesis; L-tryptophan from chorismate: step 2/5. Functionally, catalyzes the transfer of the phosphoribosyl group of 5-phosphorylribose-1-pyrophosphate (PRPP) to anthranilate to yield N-(5'-phosphoribosyl)-anthranilate (PRA). This chain is Anthranilate phosphoribosyltransferase, found in Symbiobacterium thermophilum (strain DSM 24528 / JCM 14929 / IAM 14863 / T).